A 434-amino-acid chain; its full sequence is Protein translocase subunit SecY (434 aa).

Transmembrane regions (helical) follow at residues 19–39 (LFTL…IPGI), 73–93 (IFML…LLVY), 117–137 (YLTI…AKGI), 148–168 (YIFV…WFGE), 179–199 (TSLI…FNLF), 209–229 (VNPV…ILII), 264–284 (VLPV…LSGF), 300–320 (PNGF…TYFY), 362–382 (FSGS…QNIF), and 391–411 (IMGG…LIHI).

It belongs to the SecY/SEC61-alpha family. As to quaternary structure, component of the Sec protein translocase complex. Heterotrimer consisting of SecY, SecE and SecG subunits. The heterotrimers can form oligomers, although 1 heterotrimer is thought to be able to translocate proteins. Interacts with the ribosome. Interacts with SecDF, and other proteins may be involved. Interacts with SecA.

The protein localises to the cell inner membrane. In terms of biological role, the central subunit of the protein translocation channel SecYEG. Consists of two halves formed by TMs 1-5 and 6-10. These two domains form a lateral gate at the front which open onto the bilayer between TMs 2 and 7, and are clamped together by SecE at the back. The channel is closed by both a pore ring composed of hydrophobic SecY resides and a short helix (helix 2A) on the extracellular side of the membrane which forms a plug. The plug probably moves laterally to allow the channel to open. The ring and the pore may move independently. The chain is Protein translocase subunit SecY from Borreliella burgdorferi (strain ATCC 35210 / DSM 4680 / CIP 102532 / B31) (Borrelia burgdorferi).